A 115-amino-acid chain; its full sequence is Cell division topological specificity factor (115 aa).

Positions 93–115 (QLKEPKNQSELDSPETEGTDQKS) are disordered. A compositionally biased stretch (acidic residues) spans 104 to 115 (DSPETEGTDQKS).

The protein belongs to the MinE family.

Its function is as follows. Prevents the cell division inhibition by proteins MinC and MinD at internal division sites while permitting inhibition at polar sites. This ensures cell division at the proper site by restricting the formation of a division septum at the midpoint of the long axis of the cell. In Prochlorococcus marinus (strain NATL1A), this protein is Cell division topological specificity factor.